A 314-amino-acid polypeptide reads, in one-letter code: Phosphoribosylaminoimidazole-succinocarboxamide synthase (314 aa).

Belongs to the SAICAR synthetase family.

The catalysed reaction is 5-amino-1-(5-phospho-D-ribosyl)imidazole-4-carboxylate + L-aspartate + ATP = (2S)-2-[5-amino-1-(5-phospho-beta-D-ribosyl)imidazole-4-carboxamido]succinate + ADP + phosphate + 2 H(+). It functions in the pathway purine metabolism; IMP biosynthesis via de novo pathway; 5-amino-1-(5-phospho-D-ribosyl)imidazole-4-carboxamide from 5-amino-1-(5-phospho-D-ribosyl)imidazole-4-carboxylate: step 1/2. The polypeptide is Phosphoribosylaminoimidazole-succinocarboxamide synthase (Bacteroides fragilis (strain ATCC 25285 / DSM 2151 / CCUG 4856 / JCM 11019 / LMG 10263 / NCTC 9343 / Onslow / VPI 2553 / EN-2)).